The chain runs to 105 residues: Large ribosomal subunit protein bL21 (105 aa).

Belongs to the bacterial ribosomal protein bL21 family. In terms of assembly, part of the 50S ribosomal subunit. Contacts protein L20.

This protein binds to 23S rRNA in the presence of protein L20. In Aliarcobacter butzleri (strain RM4018) (Arcobacter butzleri), this protein is Large ribosomal subunit protein bL21.